A 78-amino-acid polypeptide reads, in one-letter code: MARKDDVTGEGPVTGNSVSDSNQKTNRRFKRNLHEKRFYIPSEDRHVKLKVSSKTLKTINKKGIQAVLEEARKQGYDV.

The segment at 1-33 (MARKDDVTGEGPVTGNSVSDSNQKTNRRFKRNL) is disordered. The segment covering 14–24 (TGNSVSDSNQK) has biased composition (polar residues).

The protein belongs to the bacterial ribosomal protein bL28 family.

This chain is Large ribosomal subunit protein bL28, found in Salinibacter ruber (strain DSM 13855 / M31).